Reading from the N-terminus, the 263-residue chain is Small ribosomal subunit protein uS2 (263 aa).

Residues 223–246 are disordered; sequence KSLLEQDSDANADEAEVSQEEKDA. Acidic residues predominate over residues 228–240; that stretch reads QDSDANADEAEVS.

Belongs to the universal ribosomal protein uS2 family.

This chain is Small ribosomal subunit protein uS2, found in Campylobacter curvus (strain 525.92).